Reading from the N-terminus, the 331-residue chain is FMRFamide-related neuropeptides (331 aa).

A signal peptide spans 1–25; sequence MRCWSPCSLLVVIAIYCLSSHTSEA. Positions 26–65 are excised as a propeptide; that stretch reads FDLAQACVESQRLSLLPICDTIFAVQQEGAQQSADDGLRS. 2 positions are modified to phenylalanine amide: phenylalanine 71 and phenylalanine 83. Positions 86-94 are excised as a propeptide; sequence NVPDLPFED. Position 100 is a phenylalanine amide (phenylalanine 100). Residues 103–168 constitute a propeptide that is removed on maturation; the sequence is AAPQLDDLLK…YVDDVEDSDV (66 aa). Positions 122–153 are disordered; the sequence is QKSDDTSVRRKRSTDAAPQSNTDSAEQKNDSA. 2 positions are modified to phenylalanine amide: phenylalanine 174 and phenylalanine 181. Positions 184 to 194 are excised as a propeptide; that stretch reads NPSDVGSKLTE. The residue at position 200 (phenylalanine 200) is a Phenylalanine amide. Residues 203–205 constitute a propeptide that is removed on maturation; it reads DPE. Phenylalanine amide is present on phenylalanine 211. The propeptide occupies 214–216; that stretch reads SDD. Phenylalanine 222 carries the phenylalanine amide modification. Positions 225–236 are excised as a propeptide; the sequence is NPGDAEDELEED. Phenylalanine 242 carries the phenylalanine amide modification. A propeptide spanning residues 245–254 is cleaved from the precursor; sequence GDEEDEEEAE. Position 260 is a phenylalanine amide (phenylalanine 260). A propeptide spanning residues 263-265 is cleaved from the precursor; the sequence is DPE. Phenylalanine 271 bears the Phenylalanine amide mark. A propeptide spanning residues 274-277 is cleaved from the precursor; sequence NGEE. Phenylalanine 283 is subject to Phenylalanine amide. Positions 286–293 are excised as a propeptide; sequence NPEEPEAD. Position 299 is a phenylalanine amide (phenylalanine 299). A propeptide spanning residues 302–312 is cleaved from the precursor; that stretch reads GGEEDDVNTEE. At phenylalanine 318 the chain carries Phenylalanine amide. Residues 321–331 constitute a propeptide that is removed on maturation; that stretch reads SAEKCKGCLEG.

This sequence belongs to the FARP (FMRFamide related peptide) family. As to expression, present ubiquitously in the brain and regions of the central nervous system as well as in the periphery and throughout the dermal chromatophore layer (at protein level).

The protein localises to the secreted. Its function is as follows. Excitatory neurotransmitters that directly modulate chromatophore function by activating chromatophore expansion at the chromatophore neuromuscular junction. The chain is FMRFamide-related neuropeptides from Sepia officinalis (Common cuttlefish).